Consider the following 1030-residue polypeptide: ATPase MORC2A (1030 aa).

Residue Ala2 is modified to N-acetylalanine. ATP contacts are provided by residues Asn39, 87–89 (SAK), and 99–105 (QYGNGLK). Asn39 is a Mg(2+) binding site. Residues 285–362 (KTRAEQEVKK…KDAKQRALKE (78 aa)) are a coiled coil. An ATP-binding site is contributed by Lys427. The segment at 490-544 (AMEIPTTIQCDLCLKWRTLPFQLSSVETDYPDTWVCSMNPDPEQDRCEASEQKQK) adopts a CW-type zinc-finger fold. Residues Cys499, Cys502, Cys525, and Cys536 each contribute to the Zn(2+) site. Residues 530-791 (DPEQDRCEAS…HPAELRKAQK (262 aa)) are disordered. 2 stretches are compositionally biased toward basic and acidic residues: residues 532-543 (EQDRCEASEQKQ) and 550-577 (LKKD…KLEA). Residues 555 to 583 (KTQEEKQKQLTEKIRQQQEKLEALQKTTP) adopt a coiled-coil conformation. At Thr582 the chain carries Phosphothreonine. Phosphoserine is present on Ser614. Over residues 629–646 (PSIQTPRPSTQLRKTSVI) the composition is skewed to polar residues. Glycyl lysine isopeptide (Lys-Gly) (interchain with G-Cter in SUMO2) cross-links involve residues Lys650 and Lys702. Positions 693-702 (PPLSLIPSSK) are enriched in low complexity. Ser703 bears the Phosphoserine mark. Residue Lys714 forms a Glycyl lysine isopeptide (Lys-Gly) (interchain with G-Cter in SUMO2) linkage. Ser728 is modified (phosphoserine). Thr731 is modified (phosphothreonine). A phosphoserine mark is found at Ser737 and Ser741. Positions 738–775 (LAVSDEEEAEEEAEKRRERCKRGKLAVKEEKKEANELS) form a coiled coil. Residues 763–772 (AVKEEKKEAN) show a composition bias toward basic and acidic residues. Lys765 participates in a covalent cross-link: Glycyl lysine isopeptide (Lys-Gly) (interchain with G-Cter in SUMO2). Phosphoserine occurs at positions 775 and 777. Residues 779–791 (GEDHPAELRKAQK) show a composition bias toward basic and acidic residues. Lys817 is covalently cross-linked (Glycyl lysine isopeptide (Lys-Gly) (interchain with G-Cter in SUMO2)). Thr834 bears the Phosphothreonine mark. Residues 837-849 (DRWVEKGSEDVRL) are compositionally biased toward basic and acidic residues. 2 disordered regions span residues 837–874 (DRWV…EAMV) and 882–901 (PEPS…ATSP). A phosphoserine mark is found at Ser854 and Ser859. Over residues 856 to 865 (EHQSPDTQQE) the composition is skewed to polar residues. A Glycyl lysine isopeptide (Lys-Gly) (interchain with G-Cter in SUMO2) cross-link involves residue Lys930. A coiled-coil region spans residues 966–1011 (RADSRAKASEESLRTSEKKLRETEEKLQKLRTNIVALLQKVQEDID).

As to quaternary structure, homodimerizes upon ATP-binding and dissociate upon ATP hydrolysis; homodimerization is required for gene silencing. Binds histone H3 independently of the methylation status at 'Lys-9'. Interacts with HDAC4. Interacts with FAM208A/TASOR and MPHOSPH8; the interactions associate MORC2 with the HUSH complex which recruits MORC2 to heterochromatic loci. Interacts with Morc2b. Post-translationally, phosphorylated by PAK1 at Ser-737 upon DNA damage. Phosphorylation is required for ATPase activity and recruitment to damaged chromatin. As to expression, expressed in the axons and Schwann cells of peripheral nerves. Expressed in testes.

The protein resides in the nucleus. Its subcellular location is the cytoplasm. It is found in the cytosol. It localises to the chromosome. The protein localises to the nucleus matrix. The enzyme catalyses ATP + H2O = ADP + phosphate + H(+). ATPase activity is dependent of phosphorylation by PAK1 and presence of DNA. Functionally, essential for epigenetic silencing by the HUSH complex. Recruited by HUSH to target site in heterochromatin, the ATPase activity and homodimerization are critical for HUSH-mediated silencing. Represses germ cell-related genes and L1 retrotransposons in collaboration with SETDB1 and the HUSH complex, the silencing is dependent of repressive epigenetic modifications, such as H3K9me3 mark. Silencing events often occur within introns of transcriptionally active genes, and lead to the down-regulation of host gene expression. During DNA damage response, regulates chromatin remodeling through ATP hydrolysis. During DNA damage response, may regulate chromatin remodeling through ATP hydrolysis. This Mus musculus (Mouse) protein is ATPase MORC2A.